Here is a 257-residue protein sequence, read N- to C-terminus: Dihydroorotate dehydrogenase B (NAD(+)), electron transfer subunit (257 aa).

The 99-residue stretch at 2 to 100 (ILIEDLTVVS…MGPQGNGFDI (99 aa)) folds into the FAD-binding FR-type domain. FAD is bound by residues 51 to 54 (RPIS), 68 to 70 (VYR), and 75 to 76 (GT). Residues Cys-220, Cys-225, Cys-228, and Cys-244 each contribute to the [2Fe-2S] cluster site.

It belongs to the PyrK family. In terms of assembly, heterotetramer of 2 PyrK and 2 PyrD type B subunits. [2Fe-2S] cluster is required as a cofactor. It depends on FAD as a cofactor.

It participates in pyrimidine metabolism; UMP biosynthesis via de novo pathway; orotate from (S)-dihydroorotate (NAD(+) route): step 1/1. Responsible for channeling the electrons from the oxidation of dihydroorotate from the FMN redox center in the PyrD type B subunit to the ultimate electron acceptor NAD(+). This Streptococcus thermophilus (strain ATCC BAA-491 / LMD-9) protein is Dihydroorotate dehydrogenase B (NAD(+)), electron transfer subunit.